The sequence spans 500 residues: Centrosomal protein of 57 kDa (500 aa).

The segment covering 1 to 16 (MAAASVSAASDSQFSS) has biased composition (low complexity). A disordered region spans residues 1 to 59 (MAAASVSAASDSQFSSVLAEPSRSNGNMVRHSSSPYVLYPPDKPFLNSDLRRSPNKPTF). Residues 22–35 (SRSNGNMVRHSSSP) show a composition bias toward polar residues. Serine 53 is subject to Phosphoserine. The centrosome localization domain (CLD) stretch occupies residues 58 to 239 (TFAYPESNSR…RAAELQSGLE (182 aa)). The stretch at 63-242 (ESNSRAIFSA…ELQSGLEANR (180 aa)) forms a coiled coil. Disordered stretches follow at residues 256–275 (STRK…GSRT) and 432–478 (QKKE…RKNL). A mediates interaction with microtubules region spans residues 278–491 (GAQPHYRLCL…KDMQTIQNSL (214 aa)). The stretch at 389 to 449 (TVELKDNLEC…KKTLDEEGNS (61 aa)) forms a coiled coil. Composition is skewed to basic and acidic residues over residues 432–444 (QKKE…KTLD) and 461–475 (SKKD…EKSR).

The protein belongs to the translokin family. Interacts with FGF2 and RAP80. Does not interact with FGF1 or FGF2 isoform 24 kDa. Homodimer and homooligomer. Interacts with microtubules. As to expression, ubiquitous (at protein level). Expressed in testis, predominantly in round spermatids. Low expression is detected in other tissues.

It localises to the nucleus. The protein resides in the cytoplasm. Its subcellular location is the cytoskeleton. It is found in the microtubule organizing center. The protein localises to the centrosome. Functionally, centrosomal protein which may be required for microtubule attachment to centrosomes. May act by forming ring-like structures around microtubules. Mediates nuclear translocation and mitogenic activity of the internalized growth factor FGF2. The polypeptide is Centrosomal protein of 57 kDa (Cep57) (Mus musculus (Mouse)).